A 20-amino-acid polypeptide reads, in one-letter code: Short cationic peptide-4a (20 aa).

Glu-20 bears the Glutamic acid 1-amide mark.

In terms of tissue distribution, expressed by the venom gland.

Its subcellular location is the secreted. This chain is Short cationic peptide-4a, found in Cupiennius salei (American wandering spider).